The chain runs to 57 residues: Large ribosomal subunit protein bL32 (57 aa).

Positions 1 to 38 (MAVQQNKPTRSKRGMRRSHDALTAVTSLSVDKTSGEKH) are disordered.

It belongs to the bacterial ribosomal protein bL32 family.

The chain is Large ribosomal subunit protein bL32 from Escherichia coli O7:K1 (strain IAI39 / ExPEC).